A 266-amino-acid chain; its full sequence is Cell wall synthesis protein Wag31 (266 aa).

The stretch at 31-64 (FLDLVENELTQLIEENSDLRQRIEELDHELAAGG) forms a coiled coil. A Phosphothreonine modification is found at Thr-77. The stretch at 152–203 (TAEATVAEAQQRADAMLADAQTRSEVQSRQAQEKADALQAEAERKHSEIMGA) forms a coiled coil. The disordered stretch occupies residues 239 to 266 (ELGQRGSAAPVDSNADAGGFDQFNRGNN).

The protein belongs to the DivIVA family. In terms of assembly, forms homooligomers. In terms of processing, phosphorylated by PknA.

It localises to the cytoplasm. Functionally, important for maintaining cell shape and cell wall integrity by localizing peptidoglycan synthesis to the cell poles. The sequence is that of Cell wall synthesis protein Wag31 (wag31) from Mycobacterium leprae (strain TN).